The primary structure comprises 139 residues: Acidic phospholipase A2 BpPLA2-TXI (139 aa).

Residues 1–16 form the signal peptide; it reads MRTLWIMAVLLVGVEG. Cys44 and Cys60 are oxidised to a cystine. Ca(2+) is bound by residues Gly45 and Gly47. His63 is a catalytic residue. Ca(2+) is bound at residue Asp64. Disulfide bonds link Cys65/Cys139, Cys73/Cys97, and Cys91/Cys102.

Belongs to the phospholipase A2 family. Group II subfamily. D49 sub-subfamily. The cofactor is Ca(2+). As to expression, expressed by the venom gland.

Its subcellular location is the secreted. The catalysed reaction is a 1,2-diacyl-sn-glycero-3-phosphocholine + H2O = a 1-acyl-sn-glycero-3-phosphocholine + a fatty acid + H(+). In terms of biological role, PLA2 catalyzes the calcium-dependent hydrolysis of the 2-acyl groups in 3-sn-phosphoglycerides. The chain is Acidic phospholipase A2 BpPLA2-TXI from Bothrops pauloensis (Neuwied's lancehead).